The following is a 204-amino-acid chain: MAEQEPTAEQLAQIAAENEEDEHSVNYKPPAQKSIQEIQELDKDDESLRKYKEALLGRVAVSADPNVPNVVVTGLTLVCSSAPGPLELDLTGDLESFKKQSFVLKEGVEYRIKISFRVNREIVSGMKYIQHTYRKGVKIDKTDYMVGSYGPRAEEYEFLTPVEEAPKGMLARGSYSIKSRFTDDDKTDHLSWEWNLTIKKDWKD.

The tract at residues 1–36 (MAEQEPTAEQLAQIAAENEEDEHSVNYKPPAQKSIQ) is disordered. A2 carries the N-acetylalanine modification. S34 carries the post-translational modification Phosphoserine. K43 is modified (N6-acetyllysine). The residue at position 47 (S47) is a Phosphoserine. N6-acetyllysine is present on residues K105 and K127. Residues K138 and K141 each participate in a glycyl lysine isopeptide (Lys-Gly) (interchain with G-Cter in SUMO1); alternate cross-link. Residues K138 and K141 each participate in a glycyl lysine isopeptide (Lys-Gly) (interchain with G-Cter in SUMO2); alternate cross-link. K141 carries the N6-acetyllysine; alternate modification. Residue K141 is modified to N6-succinyllysine; alternate. The residue at position 178 (K178) is an N6-acetyllysine.

The protein belongs to the Rho GDI family. In terms of assembly, monomer. Interacts with FER. Interacts with PLXNB3. Forms a heterodimer with RAC1. Interacts with RHOA, the affinity is increased by three orders of magnitude when RHOA is prenylated. Interacts with PSMD10; the interaction increases ARHGDIA association with RHOA, leading to ARHGDIA-mediated inactivation of RHOA and ROCK and prolonged AKT activation. Interacts with KANK2; the interaction is direct and may regulate the interaction of ARHGDIA with RHOA, RAC1 and CDC42. Interacts with RHOC. Interacts with CDC42. Interacts with NGFR (via death domain); NGFR binding decreases the affinity for RHOA.

Its subcellular location is the cytoplasm. Its function is as follows. Controls Rho proteins homeostasis. Regulates the GDP/GTP exchange reaction of the Rho proteins by inhibiting the dissociation of GDP from them, and the subsequent binding of GTP to them. Retains Rho proteins such as CDC42, RAC1 and RHOA in an inactive cytosolic pool, regulating their stability and protecting them from degradation. Actively involved in the recycling and distribution of activated Rho GTPases in the cell, mediates extraction from membranes of both inactive and activated molecules due its exceptionally high affinity for prenylated forms. Through the modulation of Rho proteins, may play a role in cell motility regulation. In glioma cells, inhibits cell migration and invasion by mediating the signals of SEMA5A and PLXNB3 that lead to inactivation of RAC1. This is Rho GDP-dissociation inhibitor 1 (ARHGDIA) from Homo sapiens (Human).